We begin with the raw amino-acid sequence, 172 residues long: Adenine phosphoribosyltransferase (172 aa).

The protein belongs to the purine/pyrimidine phosphoribosyltransferase family. In terms of assembly, homodimer.

It localises to the cytoplasm. It carries out the reaction AMP + diphosphate = 5-phospho-alpha-D-ribose 1-diphosphate + adenine. The protein operates within purine metabolism; AMP biosynthesis via salvage pathway; AMP from adenine: step 1/1. In terms of biological role, catalyzes a salvage reaction resulting in the formation of AMP, that is energically less costly than de novo synthesis. This Streptococcus thermophilus (strain ATCC BAA-250 / LMG 18311) protein is Adenine phosphoribosyltransferase.